The chain runs to 368 residues: 1-deoxy-D-xylulose 5-phosphate reductoisomerase (368 aa).

NADPH contacts are provided by threonine 10, glycine 11, serine 12, isoleucine 13, glutamine 38, and asparagine 100. Position 101 (lysine 101) interacts with 1-deoxy-D-xylulose 5-phosphate. Glutamate 102 contacts NADPH. Aspartate 125 contributes to the Mn(2+) binding site. 1-deoxy-D-xylulose 5-phosphate contacts are provided by serine 126, glutamate 127, serine 151, and histidine 172. Glutamate 127 contributes to the Mn(2+) binding site. NADPH is bound at residue glycine 178. Serine 185, asparagine 190, lysine 191, and glutamate 194 together coordinate 1-deoxy-D-xylulose 5-phosphate. Glutamate 194 contacts Mn(2+).

This sequence belongs to the DXR family. Mg(2+) is required as a cofactor. It depends on Mn(2+) as a cofactor.

The catalysed reaction is 2-C-methyl-D-erythritol 4-phosphate + NADP(+) = 1-deoxy-D-xylulose 5-phosphate + NADPH + H(+). The protein operates within isoprenoid biosynthesis; isopentenyl diphosphate biosynthesis via DXP pathway; isopentenyl diphosphate from 1-deoxy-D-xylulose 5-phosphate: step 1/6. Its function is as follows. Catalyzes the NADPH-dependent rearrangement and reduction of 1-deoxy-D-xylulose-5-phosphate (DXP) to 2-C-methyl-D-erythritol 4-phosphate (MEP). The protein is 1-deoxy-D-xylulose 5-phosphate reductoisomerase of Tropheryma whipplei (strain TW08/27) (Whipple's bacillus).